A 103-amino-acid polypeptide reads, in one-letter code: Large ribosomal subunit protein bL21 (103 aa).

The protein belongs to the bacterial ribosomal protein bL21 family. Part of the 50S ribosomal subunit. Contacts protein L20.

Its function is as follows. This protein binds to 23S rRNA in the presence of protein L20. This is Large ribosomal subunit protein bL21 from Ruthia magnifica subsp. Calyptogena magnifica.